Consider the following 72-residue polypeptide: Translation initiation factor IF-1 (72 aa).

Residues 1–72 enclose the S1-like domain; that stretch reads MAKEDVIEVE…TRGRITYRYK (72 aa). The residue at position 60 (tyrosine 60) is a Phosphotyrosine.

It belongs to the IF-1 family. As to quaternary structure, component of the 30S ribosomal translation pre-initiation complex which assembles on the 30S ribosome in the order IF-2 and IF-3, IF-1 and N-formylmethionyl-tRNA(fMet); mRNA recruitment can occur at any time during PIC assembly.

It localises to the cytoplasm. Its function is as follows. One of the essential components for the initiation of protein synthesis. Stabilizes the binding of IF-2 and IF-3 on the 30S subunit to which N-formylmethionyl-tRNA(fMet) subsequently binds. Helps modulate mRNA selection, yielding the 30S pre-initiation complex (PIC). Upon addition of the 50S ribosomal subunit IF-1, IF-2 and IF-3 are released leaving the mature 70S translation initiation complex. In Shouchella clausii (strain KSM-K16) (Alkalihalobacillus clausii), this protein is Translation initiation factor IF-1.